Here is a 389-residue protein sequence, read N- to C-terminus: Large ribosomal subunit protein uL3 (389 aa).

This sequence belongs to the universal ribosomal protein uL3 family. Component of the large ribosomal subunit. Mature ribosomes consist of a small (40S) and a large (60S) subunit. The 40S subunit contains about 32 different proteins and 1 molecule of RNA (18S). The 60S subunit contains 45 different proteins and 3 molecules of RNA (25S, 5.8S and 5S).

It localises to the cytoplasm. In terms of biological role, component of the ribosome, a large ribonucleoprotein complex responsible for the synthesis of proteins in the cell. The small ribosomal subunit (SSU) binds messenger RNAs (mRNAs) and translates the encoded message by selecting cognate aminoacyl-transfer RNA (tRNA) molecules. The large subunit (LSU) contains the ribosomal catalytic site termed the peptidyl transferase center (PTC), which catalyzes the formation of peptide bonds, thereby polymerizing the amino acids delivered by tRNAs into a polypeptide chain. The nascent polypeptides leave the ribosome through a tunnel in the LSU and interact with protein factors that function in enzymatic processing, targeting, and the membrane insertion of nascent chains at the exit of the ribosomal tunnel. RPL3 plays a role in coordinating processes of accommodating the aminoacyl-tRNA in the PTC. The protein is Large ribosomal subunit protein uL3 of Candida albicans (strain SC5314 / ATCC MYA-2876) (Yeast).